We begin with the raw amino-acid sequence, 369 residues long: Cobalt-precorrin-5B C(1)-methyltransferase (369 aa).

Belongs to the CbiD family.

It carries out the reaction Co-precorrin-5B + S-adenosyl-L-methionine = Co-precorrin-6A + S-adenosyl-L-homocysteine. The protein operates within cofactor biosynthesis; adenosylcobalamin biosynthesis; cob(II)yrinate a,c-diamide from sirohydrochlorin (anaerobic route): step 6/10. In terms of biological role, catalyzes the methylation of C-1 in cobalt-precorrin-5B to form cobalt-precorrin-6A. The protein is Cobalt-precorrin-5B C(1)-methyltransferase of Brucella melitensis biotype 1 (strain ATCC 23456 / CCUG 17765 / NCTC 10094 / 16M).